Consider the following 145-residue polypeptide: Protein FimA (145 aa).

The protein belongs to the fimbrial protein family.

The protein localises to the fimbrium. The sequence is that of Protein FimA (fimA) from Bordetella pertussis.